We begin with the raw amino-acid sequence, 154 residues long: Ribonuclease P protein component (154 aa).

Belongs to the RnpA family. As to quaternary structure, consists of a catalytic RNA component (M1 or rnpB) and a protein subunit.

It catalyses the reaction Endonucleolytic cleavage of RNA, removing 5'-extranucleotides from tRNA precursor.. Functionally, RNaseP catalyzes the removal of the 5'-leader sequence from pre-tRNA to produce the mature 5'-terminus. It can also cleave other RNA substrates such as 4.5S RNA. The protein component plays an auxiliary but essential role in vivo by binding to the 5'-leader sequence and broadening the substrate specificity of the ribozyme. The polypeptide is Ribonuclease P protein component (Chlorobaculum tepidum (strain ATCC 49652 / DSM 12025 / NBRC 103806 / TLS) (Chlorobium tepidum)).